We begin with the raw amino-acid sequence, 1162 residues long: Nucleoporin nup132 (1162 aa).

Belongs to the nucleoporin Nup133 family. In terms of assembly, component of the npc107-120 complex which consists of nup85, nup107, nup120, nup131, nup132 and seh1. Interacts with nup107.

The protein resides in the nucleus envelope. Functions as a component of the nuclear pore complex (NPC). NPC components, collectively referred to as nucleoporins (NUPs), can play the role of both NPC structural components and of docking or interaction partners for transiently associated nuclear transport factors. Active directional transport is assured by both, a Phe-Gly (FG) repeat affinity gradient for these transport factors across the NPC and a transport cofactor concentration gradient across the nuclear envelope. The protein is Nucleoporin nup132 (nup132) of Schizosaccharomyces pombe (strain 972 / ATCC 24843) (Fission yeast).